Consider the following 79-residue polypeptide: Acyl carrier protein (79 aa).

Residues 2 to 77 form the Carrier domain; sequence SDIEARVKKI…LAIDYAKNNV (76 aa). S37 is subject to O-(pantetheine 4'-phosphoryl)serine.

This sequence belongs to the acyl carrier protein (ACP) family. Post-translationally, 4'-phosphopantetheine is transferred from CoA to a specific serine of apo-ACP by AcpS. This modification is essential for activity because fatty acids are bound in thioester linkage to the sulfhydryl of the prosthetic group.

The protein resides in the cytoplasm. It functions in the pathway lipid metabolism; fatty acid biosynthesis. Its function is as follows. Carrier of the growing fatty acid chain in fatty acid biosynthesis. In Leptothrix cholodnii (strain ATCC 51168 / LMG 8142 / SP-6) (Leptothrix discophora (strain SP-6)), this protein is Acyl carrier protein.